The chain runs to 150 residues: Cytochrome b5 type B (150 aa).

The propeptide occupies 1–15; that stretch reads MSGSMATAEASGSDG. The disordered stretch occupies residues 1–20; sequence MSGSMATAEASGSDGKGQEV. The residue at position 23 (serine 23) is a Phosphoserine. A Cytochrome b5 heme-binding domain is found at 24–100; that stretch reads VTYYRLEEVA…LKQYYIGDIH (77 aa). Lysine 34 is modified (N6-acetyllysine). Serine 37 carries the phosphoserine modification. Lysine 39 bears the N6-methyllysine mark. Residues histidine 59 and histidine 83 each contribute to the heme site. Serine 84 is modified (phosphoserine). The helical transmembrane segment at 123-140 threads the bilayer; the sequence is WAYWILPIIGAVLLGFLY.

This sequence belongs to the cytochrome b5 family. In terms of assembly, component of a complex composed of cytochrome b5, NADH-cytochrome b5 reductase (CYB5R3) and MTARC2.

Its subcellular location is the mitochondrion outer membrane. Functionally, cytochrome b5 is a membrane-bound hemoprotein functioning as an electron carrier for several membrane-bound oxygenases. In Homo sapiens (Human), this protein is Cytochrome b5 type B (CYB5B).